The primary structure comprises 1442 residues: Protein patched homolog 1 (1442 aa).

Residues 1 to 45 (MASAADALEPESGSSTAGGGSHPVRAARSARGRRRRSGGTRRAAA) form a disordered region. The Cytoplasmic segment spans residues 1–101 (MASAADALEP…GCYIQKNCGK (101 aa)). Basic residues predominate over residues 28–39 (RSARGRRRRSGG). Residues 102-122 (FLVVGLLYSAFAVGLRAANLE) traverse the membrane as a helical segment. The Extracellular portion of the chain corresponds to 123–436 (TNVEELWVEV…LDDILKSFSD (314 aa)). N-linked (GlcNAc...) asparagine glycans are attached at residues asparagine 141, asparagine 312, asparagine 349, and asparagine 414. A helical transmembrane segment spans residues 437–457 (VSVIRVASGYLLMLAYACLTM). One can recognise an SSD domain in the interval 438–598 (SVIRVASGYL…LLIFPAILSM (161 aa)). Topologically, residues 458 to 472 (LRWDCAKSQGAVGLA) are cytoplasmic. Residues 473–493 (GVLLVALSVAAGLGLCSLIGI) traverse the membrane as a helical segment. At 494-501 (SFNAATTQ) the chain is on the extracellular side. The helical transmembrane segment at 502–522 (VLPFLALGVGVDDVFLLAHAF) threads the bilayer. Topologically, residues 523-547 (SETGQNKRIPFEDRTGECLKRTGAS) are cytoplasmic. Residues 548 to 568 (VALTSISNVTAFFMAALIPIP) traverse the membrane as a helical segment. Residues 569-577 (ALRAFSLQA) lie on the Extracellular side of the membrane. The chain crosses the membrane as a helical span at residues 578–598 (AVVVVFNFAMVLLIFPAILSM). Over 599-747 (DLYRREDRRL…HYAPFLLKPK (149 aa)) the chain is Cytoplasmic. A helical transmembrane segment spans residues 748 to 768 (AKVVVIFLFLGLLGLSLYGTT). Over 769–1026 (RVRDGLDLTD…WEQYIGLRHW (258 aa)) the chain is Extracellular. N-linked (GlcNAc...) asparagine glycosylation is found at asparagine 827, asparagine 874, and asparagine 999. The chain crosses the membrane as a helical span at residues 1027–1047 (LLLSISVVLACTFLVCALFLL). Residues 1048-1053 (NPWTAG) lie on the Cytoplasmic side of the membrane. A helical membrane pass occupies residues 1054–1074 (IIVVVLALMTVELFGMMGLIG). The Extracellular segment spans residues 1075–1082 (IKLSAVPV). The chain crosses the membrane as a helical span at residues 1083–1101 (VILIASVGIGVEFTVHIAL). At 1102–1120 (AFLTAIGDKNRRAVLALEH) the chain is on the cytoplasmic side. A helical membrane pass occupies residues 1121-1141 (MFAPVLDGAVSTLLGVLMLAG). Topologically, residues 1142–1153 (SEFDFIVRYFFA) are extracellular. Residues 1154-1174 (VLAILTILGVLNGLVLLPVLL) traverse the membrane as a helical segment. The Cytoplasmic portion of the chain corresponds to 1175–1442 (SFFGPYPEVS…EERTAGKISE (268 aa)). Disordered regions lie at residues 1188–1231 (GRNR…TTVS) and 1266–1338 (STVV…LNHK). A compositionally biased stretch (low complexity) spans 1217–1226 (SDSSDSEYSS). Positions 1276–1293 (QSSPRLQSNPEAGTQQVW) are enriched in polar residues.

Belongs to the patched family. In terms of processing, glycosylation is necessary for SHH binding. Expression is seen in the embryonic neural tube, sclerotome, visceral mesoderm, and limb bud.

It localises to the membrane. Functionally, acts as a receptor for sonic hedgehog (SHH), indian hedgehog (IHH) and desert hedgehog (DHH). Associates with the smoothened protein (SMO) to transduce the hedgehog's proteins signal. This Gallus gallus (Chicken) protein is Protein patched homolog 1 (PTCH1).